Reading from the N-terminus, the 97-residue chain is Nucleoid-associated protein Hac_0048 (97 aa).

It belongs to the YbaB/EbfC family. In terms of assembly, homodimer.

The protein resides in the cytoplasm. It localises to the nucleoid. Its function is as follows. Binds to DNA and alters its conformation. May be involved in regulation of gene expression, nucleoid organization and DNA protection. In Helicobacter acinonychis (strain Sheeba), this protein is Nucleoid-associated protein Hac_0048.